A 324-amino-acid polypeptide reads, in one-letter code: NADH-ubiquinone oxidoreductase chain 1 (324 aa).

A run of 8 helical transmembrane segments spans residues 10–30 (MIMT…LTLV), 76–96 (FLFI…WIPL), 107–127 (LGLL…LWSG), 143–163 (VAQT…TIML), 178–198 (PIYL…STLA), 229–249 (LFFL…ITLF), 260–280 (ELFS…FLWV), and 300–320 (FLPL…SYAG).

It belongs to the complex I subunit 1 family.

It localises to the mitochondrion inner membrane. It catalyses the reaction a ubiquinone + NADH + 5 H(+)(in) = a ubiquinol + NAD(+) + 4 H(+)(out). Its function is as follows. Core subunit of the mitochondrial membrane respiratory chain NADH dehydrogenase (Complex I) that is believed to belong to the minimal assembly required for catalysis. Complex I functions in the transfer of electrons from NADH to the respiratory chain. The immediate electron acceptor for the enzyme is believed to be ubiquinone. The sequence is that of NADH-ubiquinone oxidoreductase chain 1 (MT-ND1) from Excalfactoria chinensis (Blue-breasted quail).